Consider the following 169-residue polypeptide: Endoribonuclease YbeY (169 aa).

His117, His121, and His127 together coordinate Zn(2+).

The protein belongs to the endoribonuclease YbeY family. Zn(2+) serves as cofactor.

The protein resides in the cytoplasm. Its function is as follows. Single strand-specific metallo-endoribonuclease involved in late-stage 70S ribosome quality control and in maturation of the 3' terminus of the 16S rRNA. This chain is Endoribonuclease YbeY, found in Mesoplasma florum (strain ATCC 33453 / NBRC 100688 / NCTC 11704 / L1) (Acholeplasma florum).